Here is a 492-residue protein sequence, read N- to C-terminus: Histone-lysine N-methyltransferase PRDM7 (492 aa).

The segment at 1-22 (MSPERSQEESPEGDTERTERKP) is disordered. One can recognise a KRAB-related domain in the interval 23-86 (MVKDAFKDIS…RRQAIKLQVD (64 aa)). Residues 111–179 (EQSKHQKGMP…ELRRKETEGK (69 aa)) are disordered. The span at 135–150 (GTPNLLNTSDSEQAQK) shows a compositional bias: polar residues. Positions 167–179 (LKLELRRKETEGK) are enriched in basic and acidic residues. The 115-residue stretch at 244-358 (PGLRIGPSGI…PGCELLVWSG (115 aa)) folds into the SET domain.

It is found in the nucleus. The protein localises to the chromosome. It catalyses the reaction N(6),N(6)-dimethyl-L-lysyl(4)-[histone H3] + S-adenosyl-L-methionine = N(6),N(6),N(6)-trimethyl-L-lysyl(4)-[histone H3] + S-adenosyl-L-homocysteine + H(+). Histone methyltransferase that selectively methylates 'Lys-4' of dimethylated histone H3 (H3K4me2) to produce trimethylated 'Lys-4' histone H3 (H3K4me3). May play a role in epigenetic regulation of gene expression by defining an active chromatin state. The protein is Histone-lysine N-methyltransferase PRDM7 of Homo sapiens (Human).